Reading from the N-terminus, the 435-residue chain is 3-phosphoshikimate 1-carboxyvinyltransferase (435 aa).

3-phosphoshikimate contacts are provided by Lys-15, Ser-16, and Arg-20. Lys-15 is a phosphoenolpyruvate binding site. Phosphoenolpyruvate is bound by residues Gly-96 and Arg-124. The 3-phosphoshikimate site is built by Ser-169, Gln-171, Thr-195, Asp-319, and Lys-346. A phosphoenolpyruvate-binding site is contributed by Gln-171. Residue Asp-319 is the Proton acceptor of the active site. Positions 350 and 394 each coordinate phosphoenolpyruvate.

Belongs to the EPSP synthase family. In terms of assembly, monomer.

Its subcellular location is the cytoplasm. The catalysed reaction is 3-phosphoshikimate + phosphoenolpyruvate = 5-O-(1-carboxyvinyl)-3-phosphoshikimate + phosphate. It functions in the pathway metabolic intermediate biosynthesis; chorismate biosynthesis; chorismate from D-erythrose 4-phosphate and phosphoenolpyruvate: step 6/7. Catalyzes the transfer of the enolpyruvyl moiety of phosphoenolpyruvate (PEP) to the 5-hydroxyl of shikimate-3-phosphate (S3P) to produce enolpyruvyl shikimate-3-phosphate and inorganic phosphate. The protein is 3-phosphoshikimate 1-carboxyvinyltransferase of Chloroherpeton thalassium (strain ATCC 35110 / GB-78).